The chain runs to 375 residues: Succinyl-diaminopimelate desuccinylase (375 aa).

H66 contributes to the Zn(2+) binding site. Residue D68 is part of the active site. A Zn(2+)-binding site is contributed by D99. The active-site Proton acceptor is E133. Residues E134, E162, and H348 each coordinate Zn(2+).

The protein belongs to the peptidase M20A family. DapE subfamily. Homodimer. Zn(2+) is required as a cofactor. It depends on Co(2+) as a cofactor.

It catalyses the reaction N-succinyl-(2S,6S)-2,6-diaminopimelate + H2O = (2S,6S)-2,6-diaminopimelate + succinate. Its pathway is amino-acid biosynthesis; L-lysine biosynthesis via DAP pathway; LL-2,6-diaminopimelate from (S)-tetrahydrodipicolinate (succinylase route): step 3/3. In terms of biological role, catalyzes the hydrolysis of N-succinyl-L,L-diaminopimelic acid (SDAP), forming succinate and LL-2,6-diaminopimelate (DAP), an intermediate involved in the bacterial biosynthesis of lysine and meso-diaminopimelic acid, an essential component of bacterial cell walls. This Yersinia enterocolitica serotype O:8 / biotype 1B (strain NCTC 13174 / 8081) protein is Succinyl-diaminopimelate desuccinylase.